We begin with the raw amino-acid sequence, 953 residues long: Xylosyltransferase 1 (953 aa).

Over 1–17 the chain is Cytoplasmic; sequence MVAAPCARRLARRSHSA. Residues 18-38 traverse the membrane as a helical; Signal-anchor for type II membrane protein segment; it reads LLAALMVLLLHTLVVWNFSSL. At 39 to 953 the chain is on the lumenal side; the sequence is DSGAGEQRRA…GAVKPDGRLR (915 aa). Residues 48-62 show a composition bias toward low complexity; it reads AGAAAGAAEQQQPAA. Disordered stretches follow at residues 48 to 67 and 74 to 251; these read AGAA…RRER and LPAA…APKC. The span at 79–97 shows a compositional bias: gly residues; the sequence is GGPGGRAGGGGARGGGPGG. Positions 138 to 154 are enriched in basic and acidic residues; sequence KVRTDSNNENSVPKDFE. Over residues 156–165 the composition is skewed to polar residues; that stretch reads VDNSNFAPRT. Basic and acidic residues-rich tracts occupy residues 170 to 197 and 205 to 216; these read HQPE…DKRQ and GPKEVLPPREKA. A glycan (N-linked (GlcNAc...) asparagine) is linked at Asn-219. 4 disulfides stabilise this stretch: Cys-251-Cys-279, Cys-295-Cys-536, Cys-555-Cys-568, and Cys-557-Cys-566. UDP-alpha-D-xylose is bound by residues Val-327, Asp-355, and 384-386; that span reads TIW. Asn-415 carries N-linked (GlcNAc...) asparagine glycosylation. A UDP-alpha-D-xylose-binding site is contributed by 488–489; the sequence is DW. Residues Ser-569 and 592–593 contribute to the UDP-alpha-D-xylose site; that span reads RK. 2 disulfides stabilise this stretch: Cys-669–Cys-921 and Cys-914–Cys-927. Asn-771 carries N-linked (GlcNAc...) asparagine glycosylation. Residues 933-953 form a disordered region; sequence SSFSPDPKSELGAVKPDGRLR.

This sequence belongs to the glycosyltransferase 14 family. XylT subfamily. As to quaternary structure, monomer. A divalent metal cation serves as cofactor. In terms of processing, contains 7 disulfide bonds. Post-translationally, N-glycosylated. In terms of tissue distribution, detected in brain, spleen, kidney and testis, and at low levels in skeletal muscle.

It is found in the golgi apparatus membrane. It carries out the reaction UDP-alpha-D-xylose + L-seryl-[protein] = 3-O-(beta-D-xylosyl)-L-seryl-[protein] + UDP + H(+). Its pathway is glycan metabolism; chondroitin sulfate biosynthesis. It participates in glycan metabolism; heparan sulfate biosynthesis. Catalyzes the first step in the biosynthesis of chondroitin sulfate and dermatan sulfate proteoglycans, such as DCN. Transfers D-xylose from UDP-D-xylose to specific serine residues of the core protein. Required for normal maturation of chondrocytes during bone development, normal onset of ossification and normal embryonic and postnatal skeleton development, especially of the long bones. This is Xylosyltransferase 1 (Xylt1) from Mus musculus (Mouse).